The sequence spans 481 residues: uncharacterized protein (481 aa).

This sequence to M.tuberculosis RV2411c.

This is an uncharacterized protein from Synechocystis sp. (strain ATCC 27184 / PCC 6803 / Kazusa).